Here is a 750-residue protein sequence, read N- to C-terminus: Photosystem I P700 chlorophyll a apoprotein A1 (750 aa).

Transmembrane regions (helical) follow at residues 70 to 93 (VFSAHFGQLAIIFIWLSGMYFHGA), 156 to 179 (LYSTAIGGLVFAALMLFAGWFHYH), 195 to 219 (LNHHLAGLLGLGSLSWAGHQVHVSL), 291 to 309 (TAHHHLAIAVLFLVAGHMY), 346 to 369 (WHAQLALNLAMLGSLTIIVAHHMY), 385 to 411 (LSLFTHHMWIGGFLIVGAAAHAAIFMV), 433 to 455 (AIISHLNWVCIFLGFHSFGLYIH), and 531 to 549 (FLVHHIHAFTIHVTVLILL). C573 and C582 together coordinate [4Fe-4S] cluster. The next 2 helical transmembrane spans lie at 589-610 (HVFLGLFWMYNSISVVIFHFSW) and 664-686 (LSAYGLLFLGAHFVWAFSLMFLF). Residue H675 participates in chlorophyll a' binding. Chlorophyll a contacts are provided by M683 and Y691. W692 lines the phylloquinone pocket. Residues 724–744 (AVGVAHYLLGGIATTWAFFLA) traverse the membrane as a helical segment.

This sequence belongs to the PsaA/PsaB family. The PsaA/B heterodimer binds the P700 chlorophyll special pair and subsequent electron acceptors. PSI consists of a core antenna complex that captures photons, and an electron transfer chain that converts photonic excitation into a charge separation. The eukaryotic PSI reaction center is composed of at least 11 subunits. The cofactor is P700 is a chlorophyll a/chlorophyll a' dimer, A0 is one or more chlorophyll a, A1 is one or both phylloquinones and FX is a shared 4Fe-4S iron-sulfur center..

The protein resides in the plastid. The protein localises to the chloroplast thylakoid membrane. It catalyses the reaction reduced [plastocyanin] + hnu + oxidized [2Fe-2S]-[ferredoxin] = oxidized [plastocyanin] + reduced [2Fe-2S]-[ferredoxin]. PsaA and PsaB bind P700, the primary electron donor of photosystem I (PSI), as well as the electron acceptors A0, A1 and FX. PSI is a plastocyanin-ferredoxin oxidoreductase, converting photonic excitation into a charge separation, which transfers an electron from the donor P700 chlorophyll pair to the spectroscopically characterized acceptors A0, A1, FX, FA and FB in turn. Oxidized P700 is reduced on the lumenal side of the thylakoid membrane by plastocyanin. The protein is Photosystem I P700 chlorophyll a apoprotein A1 of Marchantia polymorpha (Common liverwort).